Consider the following 430-residue polypeptide: Gamma-glutamyl phosphate reductase (430 aa).

The protein belongs to the gamma-glutamyl phosphate reductase family.

It localises to the cytoplasm. The enzyme catalyses L-glutamate 5-semialdehyde + phosphate + NADP(+) = L-glutamyl 5-phosphate + NADPH + H(+). The protein operates within amino-acid biosynthesis; L-proline biosynthesis; L-glutamate 5-semialdehyde from L-glutamate: step 2/2. In terms of biological role, catalyzes the NADPH-dependent reduction of L-glutamate 5-phosphate into L-glutamate 5-semialdehyde and phosphate. The product spontaneously undergoes cyclization to form 1-pyrroline-5-carboxylate. In Psychrobacter arcticus (strain DSM 17307 / VKM B-2377 / 273-4), this protein is Gamma-glutamyl phosphate reductase.